A 457-amino-acid chain; its full sequence is Choline kinase alpha (457 aa).

The disordered stretch occupies residues 1-86; that stretch reads MKTKFCTGGE…PPADEQPEPR (86 aa). Over residues 13-32 the composition is skewed to low complexity; the sequence is PSPLGLLLSCGSGSAAPAPG. Residues 55–80 show a composition bias toward pro residues; sequence LALPPPPPLPLPLPLPQPPPPQPPAD. ATP is bound by residues 117 to 123, R146, and 207 to 213; these read RGGLSNM and QFIPSRR. Residue 119-121 participates in phosphocholine binding; that stretch reads GLS. K247 carries the post-translational modification N6-acetyllysine. Residue S279 is modified to Phosphoserine. Q308 and D330 together coordinate ATP.

The protein belongs to the choline/ethanolamine kinase family. In terms of assembly, homodimer. Heterodimer with CHKB. Monomer; acetylation by KAT5 promotes dissociation of the homodimer and monomerization. As to quaternary structure, (Microbial infection) Interacts with PI4KA/PI4KIIIalpha; CHKA bridges PI4KA/PI4KIIIalpha and hepatitis C virus (HCV) non-structural protein 5A (NS5A) and potentiates NS5A-stimulated PI4KA activity, which then facilitates the targeting of the ternary complex to the ER for viral replication. Phosphorylated at Ser-279 by AMPK in response to glucose deprivation, leading to localization to lipid droplets. Post-translationally, acetylated by KAT5 at Lys-247 following phosphorylation by AMPK, leading to monomerization and conversion into a tyrosine-protein kinase.

It localises to the cytoplasm. The protein resides in the cytosol. Its subcellular location is the lipid droplet. It catalyses the reaction choline + ATP = phosphocholine + ADP + H(+). It carries out the reaction ethanolamine + ATP = phosphoethanolamine + ADP + H(+). The enzyme catalyses L-tyrosyl-[protein] + ATP = O-phospho-L-tyrosyl-[protein] + ADP + H(+). Its pathway is phospholipid metabolism; phosphatidylcholine biosynthesis; phosphocholine from choline: step 1/1. The protein operates within phospholipid metabolism; phosphatidylethanolamine biosynthesis; phosphatidylethanolamine from ethanolamine: step 1/3. Homodimerization or heterodimerization is required for the choline and ethanolamine kinase activities. Its function is as follows. Plays a key role in phospholipid biosynthesis by catalyzing the phosphorylation of free choline to phosphocholine, the first step in phosphatidylcholine biosynthesis. Also phosphorylates ethanolamine, thereby contributing to phosphatidylethanolamine biosynthesis. Has higher activity with choline. May contribute to tumor cell growth. Functionally, this isoform plays a key role in lipolysis of lipid droplets following glucose deprivation. In response to glucose deprivation, phosphorylated by AMPK, promoting localization to lipid droplets. Phosphorylation is followed by acetylation by KAT5, leading to dissociation of the homodimer into a monomer. Monomeric CHKA isoform 1 is converted into a tyrosine-protein kinase, which phosphorylates lipid droplet structural proteins PLIN2 and PLIN3, leading to lipolysis of lipid droplets. The protein is Choline kinase alpha (CHKA) of Homo sapiens (Human).